Reading from the N-terminus, the 304-residue chain is Ribonuclease Z (304 aa).

Zn(2+)-binding residues include histidine 63, histidine 65, aspartate 67, histidine 68, histidine 141, aspartate 208, and histidine 266. The Proton acceptor role is filled by aspartate 67.

It belongs to the RNase Z family. Homodimer. Zn(2+) serves as cofactor.

It carries out the reaction Endonucleolytic cleavage of RNA, removing extra 3' nucleotides from tRNA precursor, generating 3' termini of tRNAs. A 3'-hydroxy group is left at the tRNA terminus and a 5'-phosphoryl group is left at the trailer molecule.. Functionally, zinc phosphodiesterase, which displays some tRNA 3'-processing endonuclease activity. Probably involved in tRNA maturation, by removing a 3'-trailer from precursor tRNA. The protein is Ribonuclease Z of Chlamydia trachomatis serovar L2 (strain ATCC VR-902B / DSM 19102 / 434/Bu).